We begin with the raw amino-acid sequence, 418 residues long: Pyruvate kinase isozyme G, chloroplastic (418 aa).

Residues Asp14 and Thr15 each coordinate K(+). Arg21 lines the ATP pocket. Residue Glu165 coordinates Mg(2+). Positions 188, 189, and 221 each coordinate substrate. A Mg(2+)-binding site is contributed by Asp189.

It belongs to the pyruvate kinase family. Mg(2+) serves as cofactor. It depends on K(+) as a cofactor. Expressed in developing and germinating endosperm and in roots.

It localises to the plastid. The protein localises to the chloroplast. It catalyses the reaction pyruvate + ATP = phosphoenolpyruvate + ADP + H(+). It participates in carbohydrate degradation; glycolysis; pyruvate from D-glyceraldehyde 3-phosphate: step 5/5. The protein is Pyruvate kinase isozyme G, chloroplastic of Ricinus communis (Castor bean).